The sequence spans 107 residues: Glutaconyl-CoA decarboxylase subunit delta (107 aa).

Residues M10 to A32 form a helical membrane-spanning segment. The disordered stretch occupies residues K37–Q60. The span at V47–S57 shows a compositional bias: low complexity.

It belongs to the OadG family. As to quaternary structure, heterooctamer consisting of two alpha, two beta, two gamma and two delta subunits.

It is found in the cell membrane. It catalyses the reaction (2E)-glutaconyl-CoA + Na(+)(in) + H(+) = (2E)-butenoyl-CoA + Na(+)(out) + CO2. It functions in the pathway amino-acid degradation; L-glutamate degradation via hydroxyglutarate pathway; crotonoyl-CoA from L-glutamate: step 5/5. Functionally, part of the primary sodium pump glutaconyl-CoA decarboxylase (GCD). Possible membrane anchor for the alpha subunit. The polypeptide is Glutaconyl-CoA decarboxylase subunit delta (gcdD) (Acidaminococcus fermentans (strain ATCC 25085 / DSM 20731 / CCUG 9996 / CIP 106432 / VR4)).